We begin with the raw amino-acid sequence, 212 residues long: Orotate phosphoribosyltransferase (212 aa).

5-phospho-alpha-D-ribose 1-diphosphate-binding positions include arginine 97, lysine 101, histidine 103, and 123–131; that span reads EDLISTGGS. Serine 127 serves as a coordination point for orotate.

It belongs to the purine/pyrimidine phosphoribosyltransferase family. PyrE subfamily. As to quaternary structure, homodimer. The cofactor is Mg(2+).

It catalyses the reaction orotidine 5'-phosphate + diphosphate = orotate + 5-phospho-alpha-D-ribose 1-diphosphate. It participates in pyrimidine metabolism; UMP biosynthesis via de novo pathway; UMP from orotate: step 1/2. Catalyzes the transfer of a ribosyl phosphate group from 5-phosphoribose 1-diphosphate to orotate, leading to the formation of orotidine monophosphate (OMP). This chain is Orotate phosphoribosyltransferase, found in Phocaeicola vulgatus (strain ATCC 8482 / DSM 1447 / JCM 5826 / CCUG 4940 / NBRC 14291 / NCTC 11154) (Bacteroides vulgatus).